Here is a 445-residue protein sequence, read N- to C-terminus: MLCYVTRPDAVLMEVEVEAKANGEDCLNQVCRRLGIIEVDYFGLQFTGSKGESLWLNLRNRISQQMDGLAPYRLKLRVKFFVEPHLILQEQTRHIFFLHIKEALLAGHLLCSPEQAVELSALLAQTKFGDYNQNTAKYNYEELCAKELSSATLNSIVAKHKELEGTSQASAEYQVLQIVSAMENYGIEWHSVRDSEGQKLLIGVGPEGISICKDDFSPINRIAYPVVQMATQSGKNVYLTVTKESGNSIVLLFKMISTRAASGLYRAITETHAFYRCDTVTSAVMMQYSRDLKGHLASLFLNENINLGKKYVFDIKRTSKEVYDHARRALYNAGVVDLVSRNNQSPSHSPLKSSESSMNCSSCEGLSCQQTRVLQEKLRKLKEAMLCMVCCEEEINSTFCPCGHTVCCESCAAQLQSCPVCRSRVEHVQHVYLPTHTSLLNLTVI.

The region spanning 1–279 (MLCYVTRPDA…ETHAFYRCDT (279 aa)) is the FERM domain. Residues Cys360, Cys363, and Cys368 each coordinate Fe cation. The RING-type zinc-finger motif lies at 387–422 (CMVCCEEEINSTFCPCGHTVCCESCAAQLQSCPVCR). The tract at residues 431–433 (VYL) is critical for homodimerization.

In terms of assembly, homodimer. Interacts with the E2 ubiquitin-conjugating enzyme, UBE2D1 (via RING-type zinc finger). Interacts with myosin regulatory light chain (MRLC) and TMEM4. In terms of processing, autoubiquitinated. As to expression, ubiquitously expressed.

The protein resides in the cytoplasm. The protein localises to the cell membrane. It catalyses the reaction S-ubiquitinyl-[E2 ubiquitin-conjugating enzyme]-L-cysteine + [acceptor protein]-L-lysine = [E2 ubiquitin-conjugating enzyme]-L-cysteine + N(6)-ubiquitinyl-[acceptor protein]-L-lysine.. It functions in the pathway protein modification; protein ubiquitination. With respect to regulation, can bind 1 iron ion per dimer. Iron binding seems to decrease LDLR degradation activity. Its function is as follows. E3 ubiquitin-protein ligase that mediates ubiquitination and subsequent proteasomal degradation of myosin regulatory light chain (MRLC), LDLR, VLDLR and LRP8. Activity depends on E2 enzymes of the UBE2D family. Proteasomal degradation of MRLC leads to inhibit neurite outgrowth in presence of NGF by counteracting the stabilization of MRLC by saposin-like protein (CNPY2/MSAP) and reducing CNPY2-stimulated neurite outgrowth. Acts as a sterol-dependent inhibitor of cellular cholesterol uptake by mediating ubiquitination and subsequent degradation of LDLR. The chain is E3 ubiquitin-protein ligase MYLIP (MYLIP) from Homo sapiens (Human).